The following is a 328-amino-acid chain: Nicotianamine synthase 1 (328 aa).

This sequence belongs to the nicotianamine synthase (NAS)-like family. As to expression, in roots but not in leaves.

The enzyme catalyses 3 S-adenosyl-L-methionine = nicotianamine + 3 S-methyl-5'-thioadenosine + 3 H(+). Synthesizes nicotianamine, a polyamine that is the first intermediate in the synthesis of the phytosiderophores of the mugineic acid type found in gramineae which serves as a sensor for the physiological iron status within the plant, and/or might be involved in the transport of iron. In Hordeum vulgare (Barley), this protein is Nicotianamine synthase 1 (NAS1).